A 254-amino-acid polypeptide reads, in one-letter code: tRNA pseudouridine synthase A (254 aa).

Asp52 functions as the Nucleophile in the catalytic mechanism. Tyr111 is a substrate binding site.

It belongs to the tRNA pseudouridine synthase TruA family. As to quaternary structure, homodimer.

The enzyme catalyses uridine(38/39/40) in tRNA = pseudouridine(38/39/40) in tRNA. Formation of pseudouridine at positions 38, 39 and 40 in the anticodon stem and loop of transfer RNAs. This is tRNA pseudouridine synthase A from Rhizorhabdus wittichii (strain DSM 6014 / CCUG 31198 / JCM 15750 / NBRC 105917 / EY 4224 / RW1) (Sphingomonas wittichii).